Consider the following 358-residue polypeptide: Acyl-CoA Delta-12 desaturase (358 aa).

Helical transmembrane passes span 30 to 50 and 55 to 75; these read IILYIIMHLTGFYGLYLAMFY and TVFYSWFLLVIALQGVTAGSH. Residues H75, H80, H112, H115, and H116 each contribute to the Fe cation site. A Histidine box-1 motif is present at residues 75–80; that stretch reads HRLWAH. The Histidine box-2 signature appears at 112 to 116; sequence HRVHH. Transmembrane regions (helical) follow at residues 175–195 and 200–220; these read TFFAPVIGFYLPAAIPWYFWG and TAFFVATMLRYCACTNITFLV. Residues H225, H254, H257, and H258 each contribute to the Fe cation site. The Histidine box-3 signature appears at 254–258; it reads HNYHH.

The protein belongs to the fatty acid desaturase type 1 family. Fe(2+) is required as a cofactor.

The protein localises to the membrane. It carries out the reaction (9Z)-octadecenoyl-CoA + 2 Fe(II)-[cytochrome b5] + O2 + 2 H(+) = (9Z,12Z)-octadecadienoyl-CoA + 2 Fe(III)-[cytochrome b5] + 2 H2O. It catalyses the reaction (9Z)-hexadecenoyl-CoA + 2 Fe(II)-[cytochrome b5] + O2 + 2 H(+) = (9Z,12Z)-hexadecadienoyl-CoA + 2 Fe(III)-[cytochrome b5] + 2 H2O. Functionally, catalyzes the formation of a Delta12 double bond, acting on monounsaturated fatty acyl substrates like palmitoleoyl-CoA ((9Z)-hexadecenoyl-CoA) and oleoyl-CoA ((9Z)-octadecenoyl-CoA) with higher desaturation activity on (9Z)-octadecenoyl-CoA than (9Z)-hexadecenoyl-CoA. Requires preexisting cis double bond at the Delta9 position of fatty acyls to be able to insert the Delta12 double bond. Delta12-desaturation of (9Z)-octadecenoyl-CoA in insects produces (9Z,12Z)-octadecadienoyl-CoA (linoleoyl-CoA) which may be used to supply precursors of crucial mediators of immunity and reproduction and other essential functions. This is Acyl-CoA Delta-12 desaturase from Tribolium castaneum (Red flour beetle).